The primary structure comprises 484 residues: PTS system MurNAc-GlcNAc-specific EIIBC component (484 aa).

The region spanning 5-87 (QQLAERIIAA…AELSGVKLGD (83 aa)) is the PTS EIIB type-1 domain. Catalysis depends on C27, which acts as the Phosphocysteine intermediate; for EIIB activity. In terms of domain architecture, PTS EIIC type-1 spans 130 to 484 (KSIANIFIPL…AMRQTDLLGD (355 aa)). Helical transmembrane passes span 135–155 (IFIP…IAAV), 160–180 (MVAG…FNVI), 200–220 (FGAT…TGIA), 234–254 (LQPG…LSIV), 274–294 (IALL…AGFV), 305–325 (IISI…LPLV), 349–369 (LLPI…ALWV), 384–404 (ALPV…TLPL), 408–428 (FLTA…IGHI), and 450–470 (LGYI…TYLF).

Its subcellular location is the cell membrane. The enzyme catalyses N-acetyl-beta-D-muramate-(1-&gt;4)-N-acetyl-D-glucosamine(out) + N(pros)-phospho-L-histidyl-[protein] = 6-phospho-N-acetyl-beta-D-muramate-(1-&gt;4)-N-acetyl-D-glucosamine(in) + L-histidyl-[protein]. It participates in cell wall biogenesis; peptidoglycan recycling. Functionally, the phosphoenolpyruvate-dependent sugar phosphotransferase system (sugar PTS), a major carbohydrate active transport system, catalyzes the phosphorylation of incoming sugar substrates concomitantly with their translocation across the cell membrane. This system is involved in the uptake and phosphorylation of MurNAc-GlcNAc, the principle peptidoglycan turnover product of S.aureus, yielding cytoplasmic MurNAc 6P-GlcNAc. The polypeptide is PTS system MurNAc-GlcNAc-specific EIIBC component (Staphylococcus aureus (strain Mu50 / ATCC 700699)).